The primary structure comprises 506 residues: Cobyric acid synthase (506 aa).

The region spanning 251–448 (DITIAIVQLP…LHGLFDSDAF (198 aa)) is the GATase cobBQ-type domain. C332 (nucleophile) is an active-site residue. H440 is a catalytic residue.

This sequence belongs to the CobB/CobQ family. CobQ subfamily.

It functions in the pathway cofactor biosynthesis; adenosylcobalamin biosynthesis. Catalyzes amidations at positions B, D, E, and G on adenosylcobyrinic A,C-diamide. NH(2) groups are provided by glutamine, and one molecule of ATP is hydrogenolyzed for each amidation. This Salmonella dublin (strain CT_02021853) protein is Cobyric acid synthase.